The chain runs to 111 residues: Inner membrane protein H108R (111 aa).

The helical transmembrane segment at 10 to 32 (LIVIITILITTRELSTTMLIVSL) threads the bilayer. N-linked (GlcNAc...) asparagine; by host glycosylation occurs at Asn-65.

This sequence belongs to the asfivirus H108R family.

It localises to the virion membrane. This African swine fever virus (isolate Tick/Malawi/Lil 20-1/1983) (ASFV) protein is Inner membrane protein H108R.